A 731-amino-acid chain; its full sequence is 1,4-alpha-glucan branching enzyme GlgB (731 aa).

The Nucleophile role is filled by Asp411. The Proton donor role is filled by Glu464.

It belongs to the glycosyl hydrolase 13 family. GlgB subfamily. As to quaternary structure, monomer.

It carries out the reaction Transfers a segment of a (1-&gt;4)-alpha-D-glucan chain to a primary hydroxy group in a similar glucan chain.. Its pathway is glycan biosynthesis; glycogen biosynthesis. Catalyzes the formation of the alpha-1,6-glucosidic linkages in glycogen by scission of a 1,4-alpha-linked oligosaccharide from growing alpha-1,4-glucan chains and the subsequent attachment of the oligosaccharide to the alpha-1,6 position. This is 1,4-alpha-glucan branching enzyme GlgB from Mycolicibacterium paratuberculosis (strain ATCC BAA-968 / K-10) (Mycobacterium paratuberculosis).